We begin with the raw amino-acid sequence, 591 residues long: Probable Xaa-Pro aminopeptidase PEPP (591 aa).

Residues 31 to 59 (SIHSPPPSVSAATHGGVKNPSFSQRRTSG) are disordered. Mn(2+)-binding residues include Asp-322 and Asp-333. Residues 441–450 (GLSRQAISGS) are compositionally biased toward low complexity. The segment at 441–460 (GLSRQAISGSRRLPPPRNMK) is disordered. Residues Glu-511 and Glu-552 each coordinate Mn(2+).

The protein belongs to the peptidase M24B family. Requires Mn(2+) as cofactor.

The enzyme catalyses Release of any N-terminal amino acid, including proline, that is linked to proline, even from a dipeptide or tripeptide.. Its function is as follows. Catalyzes the removal of a penultimate prolyl residue from the N-termini of peptides. In Sordaria macrospora (strain ATCC MYA-333 / DSM 997 / K(L3346) / K-hell), this protein is Probable Xaa-Pro aminopeptidase PEPP (PEPP).